The primary structure comprises 877 residues: DNA polymerase I (877 aa).

Positions M1–E310 constitute a 5'-3' exonuclease domain. Positions M311–L465 constitute a 3'-5' exonuclease domain. A polymerase region spans residues E469–K877.

The protein belongs to the DNA polymerase type-A family. In terms of assembly, single-chain monomer with multiple functions.

The catalysed reaction is DNA(n) + a 2'-deoxyribonucleoside 5'-triphosphate = DNA(n+1) + diphosphate. In terms of biological role, in addition to polymerase activity, this DNA polymerase exhibits 3'-5' and 5'-3' exonuclease activity. The polypeptide is DNA polymerase I (polA) (Bacillus caldotenax).